A 205-amino-acid chain; its full sequence is Adenylyl-sulfate kinase (205 aa).

31-38 (GLSGAGKS) contributes to the ATP binding site. Catalysis depends on S105, which acts as the Phosphoserine intermediate.

It belongs to the APS kinase family.

It catalyses the reaction adenosine 5'-phosphosulfate + ATP = 3'-phosphoadenylyl sulfate + ADP + H(+). Its pathway is sulfur metabolism; hydrogen sulfide biosynthesis; sulfite from sulfate: step 2/3. In terms of biological role, catalyzes the synthesis of activated sulfate. This Shewanella sp. (strain MR-7) protein is Adenylyl-sulfate kinase.